The chain runs to 360 residues: Carbamoyl phosphate synthase small chain (360 aa).

A CPSase region spans residues 1–169; the sequence is MTKRLLILED…TKTAYPAPGI (169 aa). L-glutamine-binding residues include Ser-46, Gly-220, and Gly-222. Residues 172 to 358 form the Glutamine amidotransferase type-1 domain; that stretch reads NIVLVDFGLK…LEMIDSWRCT (187 aa). The active-site Nucleophile is the Cys-247. Met-248, Gln-251, Asn-289, Gly-291, and Tyr-292 together coordinate L-glutamine. Active-site residues include His-331 and Asp-333.

The protein belongs to the CarA family. In terms of assembly, composed of two chains; the small (or glutamine) chain promotes the hydrolysis of glutamine to ammonia, which is used by the large (or ammonia) chain to synthesize carbamoyl phosphate. Tetramer of heterodimers (alpha,beta)4.

It catalyses the reaction hydrogencarbonate + L-glutamine + 2 ATP + H2O = carbamoyl phosphate + L-glutamate + 2 ADP + phosphate + 2 H(+). The catalysed reaction is L-glutamine + H2O = L-glutamate + NH4(+). Its pathway is amino-acid biosynthesis; L-arginine biosynthesis; carbamoyl phosphate from bicarbonate: step 1/1. It functions in the pathway pyrimidine metabolism; UMP biosynthesis via de novo pathway; (S)-dihydroorotate from bicarbonate: step 1/3. In terms of biological role, small subunit of the glutamine-dependent carbamoyl phosphate synthetase (CPSase). CPSase catalyzes the formation of carbamoyl phosphate from the ammonia moiety of glutamine, carbonate, and phosphate donated by ATP, constituting the first step of 2 biosynthetic pathways, one leading to arginine and/or urea and the other to pyrimidine nucleotides. The small subunit (glutamine amidotransferase) binds and cleaves glutamine to supply the large subunit with the substrate ammonia. This Streptococcus pyogenes serotype M3 (strain SSI-1) protein is Carbamoyl phosphate synthase small chain.